Here is a 408-residue protein sequence, read N- to C-terminus: Putative FBD-associated F-box protein At5g50270 (408 aa).

The 54-residue stretch at 1-54 (MDRISGLPDELLLRVLSLLPNVKDVVVTMVLSKRWQFLWMMVPKLVYDDSYQNL) folds into the F-box domain. The FBD domain occupies 345–408 (PLRDDLSSVP…VNPDKKYEMI (64 aa)).

This is Putative FBD-associated F-box protein At5g50270 from Arabidopsis thaliana (Mouse-ear cress).